A 48-amino-acid polypeptide reads, in one-letter code: Delta-stichotoxin-Hcr1b (48 aa).

Intrachain disulfides connect cysteine 3-cysteine 43, cysteine 5-cysteine 33, and cysteine 26-cysteine 44.

This sequence belongs to the sea anemone sodium channel inhibitory toxin family. Type II subfamily.

It is found in the secreted. Its subcellular location is the nematocyst. Functionally, binds to site 3 of voltage-gated sodium channels and inhibits the inactivation process. This Radianthus crispa (Leathery sea anemone) protein is Delta-stichotoxin-Hcr1b.